An 883-amino-acid chain; its full sequence is DNA mismatch repair protein MutS (883 aa).

602–609 (GPNMSGKS) lines the ATP pocket.

Belongs to the DNA mismatch repair MutS family.

Functionally, this protein is involved in the repair of mismatches in DNA. It is possible that it carries out the mismatch recognition step. This protein has a weak ATPase activity. This chain is DNA mismatch repair protein MutS, found in Staphylococcus haemolyticus (strain JCSC1435).